The following is a 307-amino-acid chain: Homoserine O-acetyltransferase (307 aa).

The active-site Acyl-thioester intermediate is the C142. Substrate is bound by residues K163 and S192. Catalysis depends on H235, which acts as the Proton acceptor. E237 is a catalytic residue. R249 is a binding site for substrate.

This sequence belongs to the MetA family.

It localises to the cytoplasm. It carries out the reaction L-homoserine + acetyl-CoA = O-acetyl-L-homoserine + CoA. It participates in amino-acid biosynthesis; L-methionine biosynthesis via de novo pathway; O-acetyl-L-homoserine from L-homoserine: step 1/1. In terms of biological role, transfers an acetyl group from acetyl-CoA to L-homoserine, forming acetyl-L-homoserine. The sequence is that of Homoserine O-acetyltransferase from Desulfitobacterium hafniense (strain DSM 10664 / DCB-2).